The primary structure comprises 223 residues: MSHRFDNLPDLFNLPLKPNFSCELDLQKQGFFHIAGVDEVGRGPLAGPVVTAAVILDKDHVPDGLNDSKKLSAQRRNELYCEILQSALAVSIASLCARTIDQSDIRKATLEAMRRCVTGLAIPAHYALIDGRDIPFQLPCPATALIKGDQHSVSIAAASIIAKVTRDRMMKCAGQIYKNYGLEKHVGYATLAHRIALDKYGPVVGLHRYSFAPLKGRFRDNMS.

The RNase H type-2 domain maps to 32 to 223; that stretch reads FHIAGVDEVG…LKGRFRDNMS (192 aa). Residues D38, E39, and D130 each coordinate a divalent metal cation.

It belongs to the RNase HII family. Requires Mn(2+) as cofactor. It depends on Mg(2+) as a cofactor.

It localises to the cytoplasm. It catalyses the reaction Endonucleolytic cleavage to 5'-phosphomonoester.. Endonuclease that specifically degrades the RNA of RNA-DNA hybrids. The polypeptide is Ribonuclease HII (Bartonella quintana (strain Toulouse) (Rochalimaea quintana)).